Here is a 253-residue protein sequence, read N- to C-terminus: Thiamine import ATP-binding protein ThiQ (253 aa).

Positions V8–I236 constitute an ABC transporter domain. Residue G38–S45 coordinates ATP.

This sequence belongs to the ABC transporter superfamily. Thiamine importer (TC 3.A.1.19.1) family. The complex is composed of two ATP-binding proteins (ThiQ), two transmembrane proteins (ThiP) and a solute-binding protein (ThiB).

The protein localises to the cell inner membrane. It carries out the reaction thiamine(out) + ATP + H2O = thiamine(in) + ADP + phosphate + H(+). Part of the ABC transporter complex ThiBPQ involved in thiamine import. Responsible for energy coupling to the transport system. The polypeptide is Thiamine import ATP-binding protein ThiQ (Mesorhizobium japonicum (strain LMG 29417 / CECT 9101 / MAFF 303099) (Mesorhizobium loti (strain MAFF 303099))).